The primary structure comprises 694 residues: Follicle-stimulating hormone receptor (694 aa).

The N-terminal stretch at 1-17 (MALLLVSLLAFLGSGAG) is a signal peptide. Disulfide bonds link Cys-18–Cys-25 and Cys-23–Cys-32. Positions 18 to 46 (CHHWLCHCSDRVFLCQDSKVTEIPPDLPR) constitute an LRRNT domain. Residues 18-365 (CHHWLCHCSD…EDIMGYNILR (348 aa)) are Extracellular-facing. 9 LRR repeats span residues 49–72 (IELRFVLTKLRVIPQGSFSGFKDL), 73–97 (EKIEISQNDVLEVIEADVFSNLPKL), 98–118 (HEIRIERANTLLYINPEAFQN), 119–143 (LPNLRYLLISNTGIKHLPVVHKIQS), 144–169 (LQKVLLDIQDNINLHTIARNSFMGLS), 170–192 (FDSLILWLNKNGIQEIHNCAFNG), 193–216 (TQLDELNLSDNNNLEELPNDVFRG), 217–240 (ASGPVILDISRTKVHSLPSHGLEN), and 241–259 (LKKLRARSTYSLKKLPSLD). N-linked (GlcNAc...) asparagine glycosylation is found at Asn-191 and Asn-199. 4 cysteine pairs are disulfide-bonded: Cys-275-Cys-345, Cys-276-Cys-292, Cys-276-Cys-355, and Cys-292-Cys-337. 2 N-linked (GlcNAc...) asparagine glycosylation sites follow: Asn-293 and Asn-311. Residues 366 to 386 (VLIWFISILAITGNITVLVIL) traverse the membrane as a helical segment. The Cytoplasmic segment spans residues 387–397 (TTSQYKLTVPR). Residues 398–420 (FLMCNLAFADLCIGIYLLPIASV) traverse the membrane as a helical segment. Residues 421 to 442 (DIHTKSQYHNYAIDWQTAVGCD) lie on the Extracellular side of the membrane. A disulfide bridge connects residues Cys-441 and Cys-516. Residues 443 to 464 (AAGFFTAFASELSVYTLTAIPL) form a helical membrane-spanning segment. At 465–484 (ERWHTITHAMQLERKVQLRH) the chain is on the cytoplasmic side. The chain crosses the membrane as a helical span at residues 485–507 (AASVMVMGWVFAFAAALLPIFGV). Residues 508 to 527 (SSYMKVSICLPIDIDSPLSQ) are Extracellular-facing. The helical transmembrane segment at 528–549 (LYVMALLVLNVLAFVVICGCYT) threads the bilayer. At 550–572 (HIYLTVRNPNIVSSSSDTKIAKR) the chain is on the cytoplasmic side. Residues 573 to 596 (MATLIFTDFLCMAPISLFAISASL) traverse the membrane as a helical segment. Residues 597–607 (KAPLITVSKAK) are Extracellular-facing. A helical membrane pass occupies residues 608–629 (ILLVLFYPINSCANPFLYAIFT). Residues 630–694 (KNFRRDFFIL…LVPLSQSAHN (65 aa)) are Cytoplasmic-facing.

Belongs to the G-protein coupled receptor 1 family. FSH/LSH/TSH subfamily. Homotrimer. Functions as a homotrimer binding the FSH hormone heterodimer composed of CGA and FSHB. Interacts with ARRB2. Interacts with APPL2; interaction is independent of follicle stimulating hormone stimulation. Post-translationally, N-glycosylated; indirectly required for FSH-binding, possibly via a conformational change that allows high affinity binding of hormone.

It is found in the cell membrane. Functionally, g protein-coupled receptor for follitropin, the follicle-stimulating hormone. Through cAMP production activates the downstream PI3K-AKT and ERK1/ERK2 signaling pathways. This is Follicle-stimulating hormone receptor (FSHR) from Mesocricetus auratus (Golden hamster).